The chain runs to 1385 residues: Probable serine/threonine-protein kinase DDB_G0268876 (1385 aa).

In terms of domain architecture, Protein kinase spans Leu-758–Leu-1008. ATP is bound by residues Ile-764–Val-772 and Lys-785. Asp-878 acts as the Proton acceptor in catalysis. Disordered regions lie at residues Gly-1040 to Ile-1074, Glu-1091 to Gly-1266, and Ile-1287 to Asn-1339. The segment covering Val-1055 to Lys-1073 has biased composition (polar residues). Over residues Ser-1107 to Arg-1144 the composition is skewed to low complexity. Positions Pro-1145–Pro-1162 are enriched in basic and acidic residues. 3 stretches are compositionally biased toward low complexity: residues Asn-1189–Ile-1232, Phe-1242–Gly-1266, and Asn-1295–Asn-1339.

The protein belongs to the protein kinase superfamily. TKL Ser/Thr protein kinase family.

The catalysed reaction is L-seryl-[protein] + ATP = O-phospho-L-seryl-[protein] + ADP + H(+). It carries out the reaction L-threonyl-[protein] + ATP = O-phospho-L-threonyl-[protein] + ADP + H(+). This Dictyostelium discoideum (Social amoeba) protein is Probable serine/threonine-protein kinase DDB_G0268876.